Consider the following 1070-residue polypeptide: RecBCD enzyme subunit RecC (1070 aa).

It belongs to the RecC family. In terms of assembly, heterotrimer of RecB, RecC and RecD. All subunits contribute to DNA-binding.

In terms of biological role, a helicase/nuclease that prepares dsDNA breaks (DSB) for recombinational DNA repair. Binds to DSBs and unwinds DNA via a highly rapid and processive ATP-dependent bidirectional helicase activity. Unwinds dsDNA until it encounters a Chi (crossover hotspot instigator) sequence from the 3' direction. Cuts ssDNA a few nucleotides 3' to the Chi site. The properties and activities of the enzyme are changed at Chi. The Chi-altered holoenzyme produces a long 3'-ssDNA overhang and facilitates RecA-binding to the ssDNA for homologous DNA recombination and repair. Holoenzyme degrades any linearized DNA that is unable to undergo homologous recombination. In the holoenzyme this subunit recognizes the wild-type Chi sequence, and when added to isolated RecB increases its ATP-dependent helicase processivity. In Buchnera aphidicola subsp. Acyrthosiphon pisum (strain APS) (Acyrthosiphon pisum symbiotic bacterium), this protein is RecBCD enzyme subunit RecC.